A 671-amino-acid chain; its full sequence is UvrABC system protein C (671 aa).

Residues Met1 to Thr20 are disordered. The span at Pro10–Thr20 shows a compositional bias: low complexity. Residues Pro37–Ile115 form the GIY-YIG domain. Residues Arg232–Val267 form the UVR domain.

It belongs to the UvrC family. As to quaternary structure, interacts with UvrB in an incision complex.

It is found in the cytoplasm. Functionally, the UvrABC repair system catalyzes the recognition and processing of DNA lesions. UvrC both incises the 5' and 3' sides of the lesion. The N-terminal half is responsible for the 3' incision and the C-terminal half is responsible for the 5' incision. The polypeptide is UvrABC system protein C (Albidiferax ferrireducens (strain ATCC BAA-621 / DSM 15236 / T118) (Rhodoferax ferrireducens)).